A 541-amino-acid polypeptide reads, in one-letter code: Threonine--tRNA ligase catalytic subunit (541 aa).

Residues 135–429 (DHRIIGERMD…LLEHFRGKLP (295 aa)) form a catalytic region. Zn(2+) contacts are provided by cysteine 227, histidine 278, and histidine 406.

The protein belongs to the class-II aminoacyl-tRNA synthetase family. In terms of assembly, homodimer. Probably interacts with its editing subunit. Zn(2+) is required as a cofactor.

It localises to the cytoplasm. The catalysed reaction is tRNA(Thr) + L-threonine + ATP = L-threonyl-tRNA(Thr) + AMP + diphosphate + H(+). Catalyzes the attachment of threonine to tRNA(Thr) in a two-step reaction: L-threonine is first activated by ATP to form Thr-AMP and then transferred to the acceptor end of tRNA(Thr). Also activates L-serine and transfers it to tRNA(Thr) but cannot deacylate incorrectly charged amino acid; unlike most archaea the editing function is found in a freestanding protein. The sequence is that of Threonine--tRNA ligase catalytic subunit from Metallosphaera sedula (strain ATCC 51363 / DSM 5348 / JCM 9185 / NBRC 15509 / TH2).